The sequence spans 861 residues: Rod cGMP-specific 3',5'-cyclic phosphodiesterase subunit alpha (861 aa).

Gly-2 carries the post-translational modification N-acetylglycine. 2 consecutive GAF domains span residues 73-222 (QAER…NLIM) and 254-431 (DIER…GWSV). The region spanning 483-816 (EEEELAEILQ…KEWKALADEY (334 aa)) is the PDEase domain. The active-site Proton donor is the His-559. The a divalent metal cation site is built by His-563, His-599, Asp-600, and Asp-720. Residues 821-861 (KALEEEKQKQQTAKQGAAGDQPGGNPSPAGGAPASKSCCIQ) are disordered. Positions 830-861 (QQTAKQGAAGDQPGGNPSPAGGAPASKSCCIQ) are enriched in low complexity. Residue Cys-858 is modified to Cysteine methyl ester. A lipid anchor (S-farnesyl cysteine) is attached at Cys-858. Positions 859 to 861 (CIQ) are cleaved as a propeptide — removed in mature form.

This sequence belongs to the cyclic nucleotide phosphodiesterase family. As to quaternary structure, oligomer composed of two catalytic chains (alpha and beta), an inhibitory chain (gamma) and the delta chain. A divalent metal cation is required as a cofactor.

It is found in the cell membrane. The protein resides in the cell projection. The protein localises to the cilium. It localises to the photoreceptor outer segment. It carries out the reaction 3',5'-cyclic GMP + H2O = GMP + H(+). Functionally, rod-specific cGMP phosphodiesterase that catalyzes the hydrolysis of 3',5'-cyclic GMP. This protein participates in processes of transmission and amplification of the visual signal. The protein is Rod cGMP-specific 3',5'-cyclic phosphodiesterase subunit alpha of Canis lupus familiaris (Dog).